The following is a 233-amino-acid chain: NAD-dependent protein deacylase (233 aa).

The 230-residue stretch at 1–230 (MKNIMILSGA…ALDIENFMKD (230 aa)) folds into the Deacetylase sirtuin-type domain. Residue 9–28 (GAGLSAPSGLKTFRDNDGLW) participates in NAD(+) binding. Positions 53 and 56 each coordinate substrate. 88-91 (QNVD) is an NAD(+) binding site. The active-site Proton acceptor is His-106. 4 residues coordinate Zn(2+): Cys-114, Cys-117, Cys-133, and Cys-136. NAD(+) is bound by residues 172-174 (GTS) and 200-202 (NLE).

This sequence belongs to the sirtuin family. Class III subfamily. It depends on Zn(2+) as a cofactor.

It localises to the cytoplasm. It carries out the reaction N(6)-acetyl-L-lysyl-[protein] + NAD(+) + H2O = 2''-O-acetyl-ADP-D-ribose + nicotinamide + L-lysyl-[protein]. The catalysed reaction is N(6)-succinyl-L-lysyl-[protein] + NAD(+) + H2O = 2''-O-succinyl-ADP-D-ribose + nicotinamide + L-lysyl-[protein]. Functionally, NAD-dependent lysine deacetylase and desuccinylase that specifically removes acetyl and succinyl groups on target proteins. Modulates the activities of several proteins which are inactive in their acylated form. The chain is NAD-dependent protein deacylase from Campylobacter jejuni subsp. jejuni serotype O:2 (strain ATCC 700819 / NCTC 11168).